We begin with the raw amino-acid sequence, 590 residues long: Guanylate-binding protein 5 (590 aa).

Residues 1 to 306 form an NLRP3-binding region; sequence MAPEIHMPEP…LTYVDAINSG (306 aa). Residues 1 to 310 are GTPase domain (Globular); the sequence is MAPEIHMPEP…DAINSGALPS (310 aa). Residues 35–277 form the GB1/RHD3-type G domain; it reads TQPVVVVAIV…FCSHIFTQSK (243 aa). Residues 45 to 52, 67 to 69, 182 to 183, and leucine 246 contribute to the GTP site; these read GLYRTGKS, VGS, and RD. A required for tetramerization, but not for dimerization region spans residues 529 to 590; the sequence is QIALEKARVA…RRHHHDCVIS (62 aa). Cysteine 587 is subject to Cysteine methyl ester. A lipid anchor (S-geranylgeranyl cysteine) is attached at cysteine 587. The propeptide at 588–590 is removed in mature form; it reads VIS.

The protein belongs to the TRAFAC class dynamin-like GTPase superfamily. GB1/RHD3 GTPase family. GB1 subfamily. Homodimer; homodimerizes upon GTP-binding, forming a close face-to-face dimer. Heterodimer with other family members, including GBP1, GBP2, GBP3 and GBP4. May also form tetramers (dimer of dimers) in the presence of GTP. Interacts with NLRP3, possibly in its tetrameric form, and promotes PYCARD/ASC polymerization. Isoprenylation is required for proper subcellular location. As to expression, low expression, if any, in many tissues in the absence of stimulation.

It is found in the cytoplasmic vesicle membrane. The protein resides in the golgi apparatus membrane. The protein localises to the cytoplasm. It catalyses the reaction GTP + H2O = GDP + phosphate + H(+). Interferon (IFN)-inducible GTPase that plays important roles in innate immunity against a diverse range of bacterial, viral and protozoan pathogens. Hydrolyzes GTP, but in contrast to other family members, does not produce GMP. Following infection, recruited to the pathogen-containing vacuoles or vacuole-escaped bacteria and acts as a positive regulator of inflammasome assembly by promoting the release of inflammasome ligands from bacteria. Acts by promoting lysis of pathogen-containing vacuoles, releasing pathogens into the cytosol. Following pathogen release in the cytosol, promotes recruitment of proteins that mediate bacterial cytolysis, such as Gm12250/Irgb10: this liberates ligands that are detected by inflammasomes, such as lipopolysaccharide (LPS) that activates the non-canonical CASP4/CASP11 inflammasome or double-stranded DNA (dsDNA) that activates the AIM2 inflammasome. As an activator of NLRP3 inflammasome assembly: promotes selective NLRP3 inflammasome assembly in response to microbial and soluble, but not crystalline, agents. Independently of its GTPase activity, acts as an inhibitor of various viruses infectivity by inhibiting FURIN-mediated maturation of viral envelope proteins. The protein is Guanylate-binding protein 5 of Mus musculus (Mouse).